Reading from the N-terminus, the 785-residue chain is Phenylalanine--tRNA ligase beta subunit (785 aa).

The tRNA-binding domain maps to 39–148 (APAFSGVVIA…ADAPVGQSIR (110 aa)). Residues 399-474 (PKRQAVQLRA…RVYGYNNIPA (76 aa)) enclose the B5 domain. Positions 452, 458, 461, and 462 each coordinate Mg(2+). Residues 692 to 784 (SKFQPVRRDL…AASELGAQLR (93 aa)) form the FDX-ACB domain.

This sequence belongs to the phenylalanyl-tRNA synthetase beta subunit family. Type 1 subfamily. As to quaternary structure, tetramer of two alpha and two beta subunits. Mg(2+) serves as cofactor.

Its subcellular location is the cytoplasm. The enzyme catalyses tRNA(Phe) + L-phenylalanine + ATP = L-phenylalanyl-tRNA(Phe) + AMP + diphosphate + H(+). This chain is Phenylalanine--tRNA ligase beta subunit, found in Chromobacterium violaceum (strain ATCC 12472 / DSM 30191 / JCM 1249 / CCUG 213 / NBRC 12614 / NCIMB 9131 / NCTC 9757 / MK).